The primary structure comprises 160 residues: Ubiquitin-like protein ATG12 (160 aa).

The segment at 1 to 40 (MSETPKDQGPSSPSPSPSPSAASPMPLADNEVAGSGASSP) is disordered. A Glycyl lysine isopeptide (Gly-Lys) (interchain with K-102 in ATG5) cross-link involves residue Gly-160.

Belongs to the ATG12 family. Forms a conjugate with ATG5. Forms a thioester bond with the 'Cys-196' of ATG10. Interacts with the ATG7 C-terminal 40 amino acids domain. The ATG12-ATG5 conjugate forms a complex with several units of ATG16. The ATG12-ATG5 conjugate also associates with ATG3.

The protein resides in the preautophagosomal structure membrane. Its function is as follows. Ubiquitin-like protein involved in cytoplasm to vacuole transport (Cvt), autophagy vesicles formation, mitophagy, and nucleophagy. Conjugation with ATG5 through a ubiquitin-like conjugating system involving also ATG7 as an E1-like activating enzyme and ATG10 as an E2-like conjugating enzyme, is essential for its function. The ATG12-ATG5 conjugate acts as an E3-like enzyme which is required for lipidation of ATG8 and ATG8 association to the vesicle membranes. ATG12-ATG5 rearranges the ATG3 catalytic center and enhances its E2 activity. Autophagy is required for proper vegetative growth, asexual/sexual reproduction, and full virulence. Autophagy is particularly involved in the biosynthesis of deoxynivalenol (DON), an important virulence determinant. The chain is Ubiquitin-like protein ATG12 from Gibberella zeae (strain ATCC MYA-4620 / CBS 123657 / FGSC 9075 / NRRL 31084 / PH-1) (Wheat head blight fungus).